Reading from the N-terminus, the 392-residue chain is Phosphoglycerate kinase (392 aa).

Substrate is bound by residues 26 to 28 (DLN), Arg-41, 64 to 67 (HLGR), Arg-118, and Arg-151. Residues Lys-202, Glu-319, and 345–348 (GGDT) contribute to the ATP site.

It belongs to the phosphoglycerate kinase family. In terms of assembly, monomer.

The protein localises to the cytoplasm. The enzyme catalyses (2R)-3-phosphoglycerate + ATP = (2R)-3-phospho-glyceroyl phosphate + ADP. Its pathway is carbohydrate degradation; glycolysis; pyruvate from D-glyceraldehyde 3-phosphate: step 2/5. The chain is Phosphoglycerate kinase from Photobacterium profundum (strain SS9).